The following is a 320-amino-acid chain: o-succinylbenzoate synthase (320 aa).

The active-site Proton donor is Lys133. The Mg(2+) site is built by Asp161, Glu190, and Asp213. Catalysis depends on Lys235, which acts as the Proton acceptor.

The protein belongs to the mandelate racemase/muconate lactonizing enzyme family. MenC type 1 subfamily. A divalent metal cation is required as a cofactor.

It carries out the reaction (1R,6R)-6-hydroxy-2-succinyl-cyclohexa-2,4-diene-1-carboxylate = 2-succinylbenzoate + H2O. The protein operates within quinol/quinone metabolism; 1,4-dihydroxy-2-naphthoate biosynthesis; 1,4-dihydroxy-2-naphthoate from chorismate: step 4/7. Its pathway is quinol/quinone metabolism; menaquinone biosynthesis. Converts 2-succinyl-6-hydroxy-2,4-cyclohexadiene-1-carboxylate (SHCHC) to 2-succinylbenzoate (OSB). The sequence is that of o-succinylbenzoate synthase from Salmonella paratyphi A (strain ATCC 9150 / SARB42).